A 323-amino-acid chain; its full sequence is L-lactate dehydrogenase 1 (323 aa).

NAD(+) contacts are provided by residues V17, D38, R43, Y68, and 82–83 (GA). Residues Q85 and R91 each contribute to the substrate site. NAD(+)-binding positions include S104, 121 to 123 (AAN), and S146. 123 to 126 (NPVD) contributes to the substrate binding site. A substrate-binding site is contributed by 151-154 (DTGR). H178 serves as the catalytic Proton acceptor. Phosphotyrosine is present on Y223. T232 is a substrate binding site.

Belongs to the LDH/MDH superfamily. LDH family. Homotetramer.

The protein resides in the cytoplasm. It catalyses the reaction (S)-lactate + NAD(+) = pyruvate + NADH + H(+). It functions in the pathway fermentation; pyruvate fermentation to lactate; (S)-lactate from pyruvate: step 1/1. Its function is as follows. Catalyzes the conversion of lactate to pyruvate. This is L-lactate dehydrogenase 1 from Lactobacillus johnsonii (strain CNCM I-12250 / La1 / NCC 533).